A 2157-amino-acid polypeptide reads, in one-letter code: MVHNSPCNKHKTTSISWTRILAGRCTGLFVQVSNRRRFRTQAIAFFLGEPTRGENTTEEKNPKRHKYRDFVMLVQLPRLTSSLREPFDIDQAYLRRKTILQTLNKPRSSGNRLDESDLAKRIVHQWEGASLEVRQAYKQFIGAVVELIDREVPSDEFREVAFSAYRLFNNPVEEDDSDINDNISISGKKLELQNLVGHAVSDANVKNVASFAQALYSIQPTHQSETYADEVNGGAEFGADLVFNLPARFLVEASLDETGFVDVESNDAHTSFSEGWSGVSDTKNNLSAGKFNLSWLRDACGRMVRETNSQLSREELAMAICRFLDSDKPGEEIAGDLLDLVGDGAFETVQDLIMHRKEIVDAIHHGQMILKSDKAASNTQSRMPTYGTQVTVQTESAKQIEKLRRKEEKKNKRNADLGLESEISEANFSSLLEASEKKTAFEDLIGSGEANSLALALPQGTVRKHLKGYEEVFIPPTPTAQMKPGEKLIEIKELDDFAQAAFHGYKSLNRIQSRIFQTVYHTNENILVCAPTGAGKTNIAMISVLHEIKQHFRDGYLHKNEFKIVYVAPMKALAAEVTSAFSRRLAPLNMVVKELTGDMQLTKTELEETQMIVTTPEKWDVITRKSSDMSMSMLVKLLIIDEVHLLNDDRGAVIEALVARTLRQVESTQTMIRIVGLSATLPSYLQVAQFLRVNTDTGLFYFDSSYRPVPLAQQYIGITEHNFAARNELLNEICYKKVVDSIKQGHQAMIFVHSRKDTSKTAEKLVDLARQYETLDLFTNETHPQFQLMKKDVMKSRNKDLVKFFEAGFGIHHAGMLRSDRTLTERLFSDGLLKVLVCTATLAWGVNLPAHTVVIKGTQLYDAKAGGWKDLGMLDVMQIFGRAGRPQFDKSGEGIIITSHDKLAYYLRLLTSQLPIESQFISSLKDNLNAEVVLGTVTNVKEACAWLGYTYLSIRMKLNPLAYGIGWEEIIADPSLSLKQRALVADAARSLDKAKMMRFDEKSGNFYCTELGRVASHFYIQYSSVETYNEMLKRHMNESEIINMVAHSSEFENIVVREEEQHELETLARSCCPLEVKGGPSNKHGKISILIQLYISRGSIDAFSLVSDASYISASLARIMRALFEICLRKGWCEMTLFMLEYCKAVDRQLWPHQHPLRQFERDLPSDILRKLEERRDDLDHLYEMEEKEIGALIRYNPGGRLVKQHLGYFPSIQLAATVSPITRTVLKVDLLITPNFIWKDRFHGTALRWWILIEDTENDYIYHSDLFTLTKRMARGEPQKLSFTVPIFEPHPPQYYVHAVSDSWLHAETYFTISFHNLALPEARTSHTELLDLKPLPVTSLGNKLYESLYKFSHFNPIQTQIFHVLYHTDNNVLVGAPTGSGKTISAELAMLRLFSTQPDMKVVYIAPLKAIVRERMNDWKKHLVAPLGKEMVEMTGDYTPDLVALLSADIIISTPEKWDGISRNWHTRSYVKKVGLVILDEIHLLGADRGPILEVIVSRMRYISSQTERSVRFVGLSTALANAGDLADWLGVGEIGLFNFKPSVRPVPIEVHIQGYPGKYYCPRMNSMNKPAYAAICTHSPTKPVLIFVSSRRQTRLTALDLIQFAASDEHPRQFLSVSEEDLQMVLSQITDQNLRHTLQFGIGLHHAGLNDHDRSAVEELFTNNKIQVLVSTSTLAWGVNLPAHLVIIKGTEYFDGKTKRYVDFPLTEILQMMGRAGRPQFDQHGKAVILVHEPKKSFYKKFLYEPFPVESSLKEKLHDHFNAEIVSGTIGNKEDAVHYLTWTYLFRRLMANPAYYGLEGTQDETICSYLSRLVQTTFEDLEDSGCLKVNEDSVEPTMLGTIASQYYLCYMTVSMFGSNIGPDTSLEAFLHILAGASEYDELPVRHNEENYNKTLSDRVRYPVDNNHLDDPHVKANLLFQAHFSQLALPISDYNTDLKSVLDQSIRILQAMIDICANSGWLSSSLTCMRLLQMVMQGMWSDQDSSLWMIPCMNDLLLGSLTARGIHTLHQLLNLPRETLQSVTENFPASRLSQDLQRFPRIQMNVRLQKKDSDGKKKPSTLEIRLEKTSKRNSSRALAPRFPKVKDEAWWLVLGDTSTSELFAVKRVSFTGRLITRMELPPNITSFQDTKLILVSDCYLGFEQEHSIEQLARRG.

Residues 374-394 (KAASNTQSRMPTYGTQVTVQT) form a disordered region. Residues 375–394 (AASNTQSRMPTYGTQVTVQT) show a composition bias toward polar residues. Positions 517 to 699 (QTVYHTNENI…FLRVNTDTGL (183 aa)) constitute a Helicase ATP-binding 1 domain. 530–537 (APTGAGKT) contacts ATP. Positions 641 to 644 (DEVH) match the DEVH box motif. In terms of domain architecture, Helicase C-terminal 1 spans 734 to 932 (CYKKVVDSIK…SLKDNLNAEV (199 aa)). In terms of domain architecture, SEC63 1 spans 1008-1315 (CTELGRVASH…LHAETYFTIS (308 aa)). The region spanning 1365–1540 (HVLYHTDNNV…WLGVGEIGLF (176 aa)) is the Helicase ATP-binding 2 domain. Position 1378–1385 (1378–1385 (APTGSGKT)) interacts with ATP. A DEIH box motif is present at residues 1482–1485 (DEIH). The Helicase C-terminal 2 domain occupies 1571-1780 (NKPAYAAICT…GTIGNKEDAV (210 aa)). The region spanning 1839 to 2150 (PTMLGTIASQ…YLGFEQEHSI (312 aa)) is the SEC63 2 domain.

Belongs to the DExH box helicase family.

It is found in the nucleus. The catalysed reaction is ATP + H2O = ADP + phosphate + H(+). Its function is as follows. RNA helicase that plays an essential role in pre-mRNA splicing as component of the U5 snRNP and U4/U6-U5 tri-snRNP complexes. Involved in spliceosome assembly, activation and disassembly. The chain is DExH-box ATP-dependent RNA helicase DExH14 from Arabidopsis thaliana (Mouse-ear cress).